The sequence spans 774 residues: Shugoshin (774 aa).

Residues 41–105 (SLRIRGLENE…AELSSLLASL (65 aa)) are a coiled coil. Disordered regions lie at residues 106–151 (GEPP…QEGR), 205–661 (SPSP…DAQL), and 676–774 (CASP…SMML). Residues 109–120 (PSKRRLSEERRY) show a composition bias toward basic and acidic residues. A compositionally biased stretch (acidic residues) spans 214-224 (AEETETTEQVE). Over residues 297-318 (GDNQNEPNKATKLQQGKENGNE) the composition is skewed to polar residues. The span at 382 to 398 (KGKEKVDLPAPDKKSAV) shows a compositional bias: basic and acidic residues. Over residues 399–409 (EETQGNSTSAF) the composition is skewed to polar residues. Composition is skewed to basic and acidic residues over residues 482–495 (NLRD…KELF) and 549–558 (FEKEKEKEPQ). 2 stretches are compositionally biased toward polar residues: residues 595–604 (PSVQEQSTLN) and 640–651 (QSMSRSVPTIPT). Residues 706 to 722 (ASSAASTETTATASAKP) show a composition bias toward low complexity. Over residues 743–754 (LAQEEEDEEDVG) the composition is skewed to acidic residues. A compositionally biased stretch (basic residues) spans 765–774 (RASRRRSMML).

This sequence belongs to the shugoshin family.

Its subcellular location is the nucleus. The protein resides in the chromosome. It localises to the centromere. Functionally, plays a central role in chromosome cohesion during cell division by preventing premature dissociation of cohesin complex from centromeres after prophase, when most of cohesin complex dissociates from chromosomes arms. The protein is Shugoshin (sgo-1) of Neurospora crassa (strain ATCC 24698 / 74-OR23-1A / CBS 708.71 / DSM 1257 / FGSC 987).